The following is a 662-amino-acid chain: DNA topoisomerase 4 subunit B (662 aa).

Residues Tyr20, Asn60, Asp87, 129–135 (GLHGVGV), and Lys359 contribute to the ATP site. The Toprim domain maps to 439–553 (TELFIVEGDS…DGHLYLAKPP (115 aa)). Mg(2+) is bound by residues Glu445, Asp518, and Asp520.

Belongs to the type II topoisomerase family. ParE type 1 subfamily. As to quaternary structure, heterotetramer composed of ParC and ParE. It depends on Mg(2+) as a cofactor. Mn(2+) serves as cofactor. The cofactor is Ca(2+).

The catalysed reaction is ATP-dependent breakage, passage and rejoining of double-stranded DNA.. Topoisomerase IV is essential for chromosome segregation. It relaxes supercoiled DNA. Performs the decatenation events required during the replication of a circular DNA molecule. This Rickettsia bellii (strain RML369-C) protein is DNA topoisomerase 4 subunit B.